The chain runs to 397 residues: MIKPVGSDELRPRFVYDPEQHHRLSSEAESLPSVIVSSQAAGNAVMLGAGYFSPLDGFMNLADALSSAQSMTLTDGRFFPVPLLCLLESADAIAGATRIALRDPNVEGNPVLAVMDVTAVEQVSDAQMALMTEQVYGTSDPKHPGVETFNSQGRTAISGPIQVLNFSYFQTDFPDTFRTAVEIRHEIQERGWQKIVAFQTRNPMHRAHEELCKMAMEAVEADGVVIHMLLGQLKPGDIPAPVRDAAIRTMAELYFPPNTVMVTGYGFDMLYAGPREAVLHAYFRQNMGATHFIIGRDHAGVGDYYGPFDAQTIFDDAVPTDVLAIEIFRADNTAYSKKLGRVVMMRDAPDHTPDDFIQLSGTRVREMLGQGEAPPPEFSRPEVAQILMDYYRSLPQS.

Belongs to the sulfate adenylyltransferase family.

The catalysed reaction is sulfate + ATP + H(+) = adenosine 5'-phosphosulfate + diphosphate. Its pathway is sulfur metabolism; hydrogen sulfide biosynthesis; sulfite from sulfate: step 1/3. The sequence is that of Sulfate adenylyltransferase (sat) from Allochromatium vinosum (strain ATCC 17899 / DSM 180 / NBRC 103801 / NCIMB 10441 / D) (Chromatium vinosum).